The following is a 49-amino-acid chain: Large ribosomal subunit protein bL33B (49 aa).

It belongs to the bacterial ribosomal protein bL33 family.

The chain is Large ribosomal subunit protein bL33B (rpmG2) from Listeria innocua serovar 6a (strain ATCC BAA-680 / CLIP 11262).